A 904-amino-acid polypeptide reads, in one-letter code: E3 ubiquitin-protein ligase ZNF598 (904 aa).

The RING-type zinc finger occupies 29–69; it reads CVLCCGDLEATALGRCDHPVCYRCSTKMRVLCEQRYCAVCR. The C2H2-type zinc-finger motif lies at 187–210; the sequence is PLCKFCDERYLDNDELLKHLRRDH. A Phosphotyrosine modification is found at tyrosine 306. Disordered regions lie at residues 312-469 and 490-656; these read YSRQ…GLAL and VSSV…LPRP. Over residues 346–358 the composition is skewed to low complexity; it reads AAAVRASVAAQQQ. Basic and acidic residues predominate over residues 359-388; it reads EEARRSEDQEEGGRPKKEEAAARGPEDPRG. Residues 404 to 416 show a composition bias toward polar residues; it reads ETSTNGPVSQEAF. Positions 418 to 431 are enriched in low complexity; the sequence is VTGPAAPGCVGVPG. Residues glycine 428, glycine 431, and serine 437 each carry the phosphoserine modification. Composition is skewed to low complexity over residues 447–461 and 502–513; these read SLSA…TAAT and SLVSAWNSSSSS. Residues 521–531 show a composition bias toward polar residues; that stretch reads LSAQATGSGQP. The span at 534 to 543 shows a compositional bias: basic residues; the sequence is KAGKGSRGGR. Positions 564-584 are enriched in polar residues; that stretch reads LLSTRPTGSVSSTLGLASIQP.

The protein belongs to the ZNF598/HEL2 family. Interacts with the E2 ubiquitin-conjugating enzyme UBE2D3. Component of the 4EHP-GYF2 complex, at least composed of EIF4E2, GIGYF2 and ZNF598.

The protein localises to the cytoplasm. It localises to the cytosol. The enzyme catalyses S-ubiquitinyl-[E2 ubiquitin-conjugating enzyme]-L-cysteine + [acceptor protein]-L-lysine = [E2 ubiquitin-conjugating enzyme]-L-cysteine + N(6)-ubiquitinyl-[acceptor protein]-L-lysine.. The protein operates within protein modification; protein ubiquitination. Functionally, E3 ubiquitin-protein ligase that plays a key role in the ribosome quality control (RQC), a pathway that takes place when a ribosome has stalled during translation, leading to degradation of nascent peptide chains. ZNF598 is activated when ribosomes are stalled within an mRNA following translation of prematurely polyadenylated mRNAs. Acts as a ribosome collision sensor: specifically recognizes and binds collided di-ribosome, which arises when a trailing ribosome encounters a slower leading ribosome, leading to terminally arrest translation. Following binding to colliding ribosomes, mediates monoubiquitination of 40S ribosomal proteins RPS10/eS10 and RPS3/uS3, and 'Lys-63'-linked polyubiquitination of RPS20/uS10. Polyubiquitination of RPS20/uS10 promotes recruitment of the RQT (ribosome quality control trigger) complex, which drives the disassembly of stalled ribosomes, followed by degradation of nascent peptides. E3 ubiquitin-protein ligase activity is dependent on the E2 ubiquitin-conjugating enzyme UBE2D3. Also acts as an adapter that recruits the 4EHP-GYF2 complex to mRNAs. Independently of its role in RQC, may also act as a negative regulator of interferon-stimulated gene (ISG) expression. In terms of biological role, (Microbial infection) Required for poxvirus protein synthesis by mediating ubiquitination of RPS10/eS10 and RPS20/uS10. Poxvirus encoding mRNAs contain unusual 5' poly(A) leaders and ZNF598 is required for their translational efficiency, possibly via its ability to suppress readthrough or sliding on shorter poly(A) tracts. The sequence is that of E3 ubiquitin-protein ligase ZNF598 from Homo sapiens (Human).